A 399-amino-acid chain; its full sequence is Argininosuccinate synthase (399 aa).

8–16 (AYSGGLDTT) provides a ligand contact to ATP. Y87 provides a ligand contact to L-citrulline. An ATP-binding site is contributed by G117. Positions 119, 123, and 124 each coordinate L-aspartate. An L-citrulline-binding site is contributed by N123. The L-citrulline site is built by R127, S175, E259, and Y271.

Belongs to the argininosuccinate synthase family. Type 1 subfamily. As to quaternary structure, homotetramer.

Its subcellular location is the cytoplasm. It carries out the reaction L-citrulline + L-aspartate + ATP = 2-(N(omega)-L-arginino)succinate + AMP + diphosphate + H(+). It functions in the pathway amino-acid biosynthesis; L-arginine biosynthesis; L-arginine from L-ornithine and carbamoyl phosphate: step 2/3. The protein is Argininosuccinate synthase of Corynebacterium urealyticum (strain ATCC 43042 / DSM 7109).